An 846-amino-acid polypeptide reads, in one-letter code: Enhancer of polycomb-like protein 1 (846 aa).

Disordered stretches follow at residues 169-204 (FNSK…KGDA), 391-466 (TSDE…APDA), 587-609 (EKKR…PKAM), 682-702 (AADA…PQPN), and 759-804 (QVQA…GVKQ). Residues 180 to 203 (VKSDKEQGRGMRVKGKDREKEKGD) show a composition bias toward basic and acidic residues. A compositionally biased stretch (polar residues) spans 411–426 (PSLSGQTPLTSGQSSS). The segment covering 432–452 (TDKDREERAQRERYDAQRNAE) has biased composition (basic and acidic residues). Residues 434–490 (KDREERAQRERYDAQRNAERSGILSGRSNAPDALKERLQALQQKTEEMLARKKEQDA) are a coiled coil. Pro residues predominate over residues 686 to 702 (KPPPAPIFQKPPAPQPN). Low complexity predominate over residues 759–773 (QVQAQGQGHPQAHLQ). Over residues 774–796 (THPQGVSQPNGVNSPMPNGQQML) the composition is skewed to polar residues.

Belongs to the enhancer of polycomb family. As to quaternary structure, component of the NuA4 histone acetyltransferase complex.

It is found in the nucleus. Its function is as follows. Component of the NuA4 histone acetyltransferase complex which is involved in transcriptional activation of selected genes principally by acetylation of nucleosomal histone H4 and H2A. The NuA4 complex is also involved in DNA repair. Involved in gene silencing by neighboring heterochromatin, blockage of the silencing spreading along the chromosome, and required for cell cycle progression through G2/M. This is Enhancer of polycomb-like protein 1 (EPL1) from Cryptococcus neoformans var. neoformans serotype D (strain B-3501A) (Filobasidiella neoformans).